We begin with the raw amino-acid sequence, 216 residues long: Ribosomal RNA small subunit methyltransferase G (216 aa).

S-adenosyl-L-methionine is bound by residues Gly-75, Leu-80, and Arg-141.

This sequence belongs to the methyltransferase superfamily. RNA methyltransferase RsmG family.

The protein localises to the cytoplasm. The enzyme catalyses guanosine(527) in 16S rRNA + S-adenosyl-L-methionine = N(7)-methylguanosine(527) in 16S rRNA + S-adenosyl-L-homocysteine. Specifically methylates the N7 position of guanine in position 527 of 16S rRNA. This Nitrosospira multiformis (strain ATCC 25196 / NCIMB 11849 / C 71) protein is Ribosomal RNA small subunit methyltransferase G.